Reading from the N-terminus, the 277-residue chain is Shikimate dehydrogenase (NADP(+)) (277 aa).

Shikimate-binding positions include 17 to 19 and Thr-64; that span reads SRS. The Proton acceptor role is filled by Lys-68. Asn-88 and Asp-103 together coordinate shikimate. Residues 128 to 132 and Leu-217 each bind NADP(+); that span reads GAGGS. A shikimate-binding site is contributed by Tyr-219. Residue Gly-240 coordinates NADP(+).

The protein belongs to the shikimate dehydrogenase family. In terms of assembly, homodimer.

The catalysed reaction is shikimate + NADP(+) = 3-dehydroshikimate + NADPH + H(+). The protein operates within metabolic intermediate biosynthesis; chorismate biosynthesis; chorismate from D-erythrose 4-phosphate and phosphoenolpyruvate: step 4/7. Functionally, involved in the biosynthesis of the chorismate, which leads to the biosynthesis of aromatic amino acids. Catalyzes the reversible NADPH linked reduction of 3-dehydroshikimate (DHSA) to yield shikimate (SA). In Afipia carboxidovorans (strain ATCC 49405 / DSM 1227 / KCTC 32145 / OM5) (Oligotropha carboxidovorans), this protein is Shikimate dehydrogenase (NADP(+)).